Reading from the N-terminus, the 957-residue chain is Collagen alpha-1(XXI) chain (957 aa).

An N-terminal signal peptide occupies residues 1 to 16; it reads MPGIIYILCSILLIES. One can recognise a VWFA domain in the interval 37 to 211; that stretch reads DLVFILDGSW…RIREIMKQKL (175 aa). A Laminin G-like domain is found at 230-412; the sequence is GFDILLGLGI…LQKLRIYCDP (183 aa). 2 disordered regions span residues 441–788 and 820–935; these read PAPC…GKEQ and CKTQ…DAGI. Collagen-like domains follow at residues 448-501, 502-543, 544-591, 592-642, 643-684, 685-741, 742-786, and 825-882; these read PGEK…PRGF, AGLK…DKGD, IGID…EEGK, PGPP…ISGP, EGIS…IPGQ, QGYT…EIGE, HGHR…QQGK, and GSPG…GNKG. Over residues 483-498 the composition is skewed to low complexity; that stretch reads TSGSPGIPGSPGVQGP. Residues 535–556 show a composition bias toward basic and acidic residues; the sequence is MGPKGDKGDIGIDGKKGTKGDK. Composition is skewed to low complexity over residues 597–616 and 633–649; these read MEGLRGLPGIPGIPGNDGAN and PTGTPGISGPEGISGPQ. Residues 733 to 744 show a composition bias toward basic and acidic residues; it reads KGEKGEIGEHGH. Residues 775–786 show a composition bias toward low complexity; the sequence is QGLPGPKGQQGK.

It belongs to the fibril-associated collagens with interrupted helices (FACIT) family.

The protein localises to the secreted. It localises to the extracellular space. The protein resides in the extracellular matrix. Its subcellular location is the cytoplasm. The protein is Collagen alpha-1(XXI) chain (col21a1) of Xenopus laevis (African clawed frog).